Reading from the N-terminus, the 288-residue chain is Rhox homeobox family member 2B (288 aa).

The segment at 16 to 136 is disordered; that stretch reads SPAVDDEKEL…GLEPGNAQQP (121 aa). A compositionally biased stretch (acidic residues) spans 39 to 48; the sequence is VKEEEEDAQP. Over residues 68 to 80 the composition is skewed to basic and acidic residues; that stretch reads GEEKDGGGEEKDG. The homeobox DNA-binding region spans 134 to 193; that stretch reads QQPNVHAFTPLQLQELECIFQREQFPSEFLRRRLARSMNVTELAVQIWFENRRAKWRRHQ. Residues 186-195 carry the Nuclear localization signal motif; sequence RAKWRRHQRA.

It belongs to the paired-like homeobox family. PEPP subfamily. Expressed in testis, mainly expressed in germ cells, but also detected in somatic cells such as Sertoli cells, Leydig cells and peritubular cells.

Its subcellular location is the nucleus. Functionally, transcription factor maybe involved in reproductive processes. Modulates expression of target genes encoding proteins involved in processes relevant to spermatogenesis. The chain is Rhox homeobox family member 2B from Homo sapiens (Human).